The sequence spans 1588 residues: Multicopy suppressor of chk1 protein 1 (1588 aa).

The tract at residues 38-60 is disordered; that stretch reads HAKPSTQQQQQQQNISNETTSTG. Residues 51 to 60 show a composition bias toward polar residues; sequence NISNETTSTG. Residues 82 to 124 form the JmjN domain; it reads NVRVTPKKEEFSRGLDFISDLYDQTARKSGAVRVIPPDNWKCP. The segment at 298-345 adopts a PHD-type 1 zinc-finger fold; the sequence is KCKLCAQEGSSLVTCCICQSNYHYACVEAPFAPFSDIHYWTCNSCIPS. Over residues 385 to 395 the composition is skewed to polar residues; that stretch reads PLTLPSNTKTP. The tract at residues 385–412 is disordered; sequence PLTLPSNTKTPPASARQSSRRTRSTSGK. A JmjC domain is found at 475-645; the sequence is FPTSRQNAYY…DMHAENSFNM (171 aa). Positions 848-872 are disordered; sequence EKRKPKRGSATHSHLESPSEEVEDL. The segment at 1171 to 1220 adopts a PHD-type 2 zinc-finger fold; the sequence is FHYCFCRQPEAGMMIECELCHEWYHAKCMKMSKKKLRADEKFICPICDYR. Positions 1319 to 1341 are disordered; it reads APQPPPFIGESRSNRKPRPTKRQ. The PHD-type 3 zinc finger occupies 1454-1505; it reads SVICLCRQPFAISDGTVQCHNCLEWFHYECVGLSSDIVSTLSNYACPDCCSK.

The protein localises to the nucleus. Functionally, has a role in regulating chromatin structure via global deacetylation of histone H3. This function is associated with the activity of a histone deacetylase. This is Multicopy suppressor of chk1 protein 1 (msc1) from Schizosaccharomyces pombe (strain 972 / ATCC 24843) (Fission yeast).